The chain runs to 114 residues: Non-specific lipid-transfer protein 1 (114 aa).

A signal peptide spans 1–23; sequence MEMVSKIACFVLLCMVVVAPHAE. Intrachain disulfides connect Cys-27–Cys-73, Cys-37–Cys-50, Cys-51–Cys-96, and Cys-71–Cys-110.

The protein belongs to the plant LTP family.

Its function is as follows. Plant non-specific lipid-transfer proteins transfer phospholipids as well as galactolipids across membranes. May play a role in wax or cutin deposition in the cell walls of expanding epidermal cells and certain secretory tissues. The chain is Non-specific lipid-transfer protein 1 (TSW12) from Solanum lycopersicum (Tomato).